The sequence spans 144 residues: (R)-specific enoyl-CoA hydratase (144 aa).

One can recognise a MaoC-like domain in the interval 13 to 128 (DIKEGQSASL…TFRTTCTVAG (116 aa)).

In terms of assembly, homotetramer.

It carries out the reaction a (3R)-3-hydroxyacyl-CoA = a (2E)-enoyl-CoA + H2O. Its function is as follows. Catalyzes the hydration of trans-2-enoyl-CoAs with a chain-length of 4-6 carbon atoms, forming the corresponding (3R)-3-hydroxyacyl-CoAs, which can then be utilized for the production of polyhydroxyalkanoates (PHA) polymers. Cannot use trans-2,3-octenoyl-CoA as substrate. The polypeptide is (R)-specific enoyl-CoA hydratase (Rhodospirillum rubrum (strain ATCC 11170 / ATH 1.1.1 / DSM 467 / LMG 4362 / NCIMB 8255 / S1)).